A 321-amino-acid chain; its full sequence is Probable NAD(P)H-dependent D-xylose reductase xyl1 (321 aa).

Y50 acts as the Proton donor in catalysis. H112 lines the substrate pocket. NAD(+) is bound by residues 166 to 167 (SN), 215 to 224 (SSFGPLSFVE), and 271 to 281 (KSNDPTRLAQN).

It belongs to the aldo/keto reductase family.

The enzyme catalyses xylitol + NAD(+) = D-xylose + NADH + H(+). The catalysed reaction is xylitol + NADP(+) = D-xylose + NADPH + H(+). It participates in carbohydrate metabolism; D-xylose degradation. In terms of biological role, catalyzes the initial reaction in the xylose utilization pathway by reducing D-xylose into xylitol. Xylose is a major component of hemicelluloses such as xylan. Most fungi utilize D-xylose via three enzymatic reactions, xylose reductase (XR), xylitol dehydrogenase (XDH), and xylulokinase, to form xylulose 5-phosphate, which enters pentose phosphate pathway. The sequence is that of Probable NAD(P)H-dependent D-xylose reductase xyl1 (xyl1) from Neosartorya fischeri (strain ATCC 1020 / DSM 3700 / CBS 544.65 / FGSC A1164 / JCM 1740 / NRRL 181 / WB 181) (Aspergillus fischerianus).